Here is a 129-residue protein sequence, read N- to C-terminus: UPF0344 protein MW0851 (129 aa).

The next 4 membrane-spanning stretches (helical) occupy residues 1–21, 36–56, 67–87, and 99–119; these read MLHLHILSWVLAIILFIATYL, LHMILRLFMLLTLISGFWILI, MLLTLKMLCGVAVVGLMEVSI, and MFWITMALIIITMVLGVILPL.

The protein belongs to the UPF0344 family.

It is found in the cell membrane. The polypeptide is UPF0344 protein MW0851 (Staphylococcus aureus (strain MW2)).